Consider the following 751-residue polypeptide: MRKLCGNGSTSMISTDSYKNTTFFVIAFSTFLISCIDYTKLFSSLSTPEAVGRLEDVLIGQCITKGSFAHTLFLIILSAFFIFQVANFAMSVPRLLDMYRFYTHLLGVPDADIQTLPWPEIVRLIGDIRKHNPVTSLSNGQATALADMVGNDAKAPVKKLDAHDIANRILRQENYLIALFNKDLLDLRVRIPVPHIFTAFIPSSMLILSADPPLPSLQSEPERKFLSFGANHLTKALEWNLRFCLLGYLFDRRGQVRKEFVREKRRKDLVQGLRRRFVFMGILNAIFAPFIILYLLIYSFFRYFEEYHKNPSSIGSRQYTPYAQWKFREFNELPHLFERRLDRSYETAKEYVDQFPKERTALVMRFVAFVAGSFAAVLLVASLIDPDLFLHFEITPHRTVLFYLGVFGSVLAISRGMVPQENMVFDPEASLNEVVRWTHYLPVEWRGQLHSQMVHQEFSKLFALKIMIFFSELLSVILTPFILFFSLPPCAAAIIDFFREFTVHVDGVGYVCSFAVFDFARHGNIDSNRPETGVQGATGPDAGDSGGGGGGGGGGFAAGKSGRQTTRRAASASPSRFKQKDWRSNENKMEQSFLHFKATHPDWQPSDPSSSLFLDRLMGAGARNRPAGGISGSIYGGGGGGGGGGGRGLGIDGSVMAEMEEERLRAKSQSYERAWAKSSHLHRPDISNPLRHPHSAASEIIEEEEGGEGDKGDDSIDGWSKRMKTDGESDDEQEEHGRLWKDDGVQIDIKQ.

The Cytoplasmic portion of the chain corresponds to 1-21 (MRKLCGNGSTSMISTDSYKNT). A helical membrane pass occupies residues 22–42 (TFFVIAFSTFLISCIDYTKLF). The Lumenal portion of the chain corresponds to 43–71 (SSLSTPEAVGRLEDVLIGQCITKGSFAHT). Residues 72–92 (LFLIILSAFFIFQVANFAMSV) form a helical membrane-spanning segment. Topologically, residues 93 to 276 (PRLLDMYRFY…KDLVQGLRRR (184 aa)) are cytoplasmic. An intramembrane segment occupies 277 to 297 (FVFMGILNAIFAPFIILYLLI). Topologically, residues 298 to 365 (YSFFRYFEEY…PKERTALVMR (68 aa)) are cytoplasmic. A helical transmembrane segment spans residues 366-386 (FVAFVAGSFAAVLLVASLIDP). Over 387–398 (DLFLHFEITPHR) the chain is Lumenal. A helical transmembrane segment spans residues 399–419 (TVLFYLGVFGSVLAISRGMVP). Over 420–465 (QENMVFDPEASLNEVVRWTHYLPVEWRGQLHSQMVHQEFSKLFALK) the chain is Cytoplasmic. An intramembrane segment occupies 466–486 (IMIFFSELLSVILTPFILFFS). The Cytoplasmic segment spans residues 487-751 (LPPCAAAIID…DDGVQIDIKQ (265 aa)). 2 disordered regions span residues 528-584 (NRPE…DWRS) and 676-751 (AKSS…DIKQ). Residues 544–557 (DSGGGGGGGGGGFA) show a composition bias toward gly residues. The span at 563–576 (RQTTRRAASASPSR) shows a compositional bias: polar residues. Composition is skewed to basic and acidic residues over residues 708 to 727 (EGDK…KTDG) and 735 to 751 (EHGR…DIKQ).

The protein belongs to the ATG9 family. In terms of assembly, homotrimer; forms a homotrimer with a central pore that forms a path between the two membrane leaflets. In terms of processing, phosphorylated by ATG1. ATG1 phosphorylation is required for preautophagosome elongation.

The protein resides in the preautophagosomal structure membrane. It is found in the cytoplasmic vesicle membrane. Its subcellular location is the golgi apparatus membrane. The protein localises to the endoplasmic reticulum membrane. The enzyme catalyses a 1,2-diacyl-sn-glycero-3-phosphocholine(in) = a 1,2-diacyl-sn-glycero-3-phosphocholine(out). It catalyses the reaction a 1,2-diacyl-sn-glycero-3-phospho-L-serine(in) = a 1,2-diacyl-sn-glycero-3-phospho-L-serine(out). The catalysed reaction is a 1,2-diacyl-sn-glycero-3-phosphoethanolamine(in) = a 1,2-diacyl-sn-glycero-3-phosphoethanolamine(out). It carries out the reaction a 1,2-diacyl-sn-glycero-3-phospho-(1D-myo-inositol-3-phosphate)(in) = a 1,2-diacyl-sn-glycero-3-phospho-(1D-myo-inositol-3-phosphate)(out). Functionally, phospholipid scramblase involved in autophagy and cytoplasm to vacuole transport (Cvt) vesicle formation. Cycles between the preautophagosomal structure/phagophore assembly site (PAS) and the cytoplasmic vesicle pool and supplies membrane for the growing autophagosome. Lipid scramblase activity plays a key role in preautophagosomal structure/phagophore assembly by distributing the phospholipids that arrive through ATG2 from the cytoplasmic to the luminal leaflet of the bilayer, thereby driving autophagosomal membrane expansion. Required for mitophagy. Also involved in endoplasmic reticulum-specific autophagic process and is essential for the survival of cells subjected to severe ER stress. Different machineries are required for anterograde trafficking to the PAS during either the Cvt pathway or bulk autophagy and for retrograde trafficking. The protein is Autophagy-related protein 9 (ATG9) of Cryptococcus gattii (Filobasidiella gattii).